The primary structure comprises 244 residues: MSKLDLNALNELPKVDRILALAETNAQLEKLDAEGRVAWALDNLPGEYVLSSSFGIQAAVSLHLVNQIRPDIPVILTDTGYLFPETYRFIDELTDKLKLNLKVYRATESAAWQEARYGKLWEQGVEGIEKYNDINKVEPMNRALKELNVQTWFAGLRREQSGSRANLPVLAIQRGVFKVLPIIDWDNRTIYQYLQKHGLKYHPLWDEGYLSVGDTHTTRKWEPGMAEEETRFFGLKRECGLHEG.

Catalysis depends on Cys239, which acts as the Nucleophile; cysteine thiosulfonate intermediate.

This sequence belongs to the PAPS reductase family. CysH subfamily.

The protein resides in the cytoplasm. It carries out the reaction [thioredoxin]-disulfide + sulfite + adenosine 3',5'-bisphosphate + 2 H(+) = [thioredoxin]-dithiol + 3'-phosphoadenylyl sulfate. It functions in the pathway sulfur metabolism; hydrogen sulfide biosynthesis; sulfite from sulfate: step 3/3. Catalyzes the formation of sulfite from phosphoadenosine 5'-phosphosulfate (PAPS) using thioredoxin as an electron donor. This chain is Phosphoadenosine 5'-phosphosulfate reductase, found in Escherichia coli O81 (strain ED1a).